Here is a 393-residue protein sequence, read N- to C-terminus: Formate-dependent phosphoribosylglycinamide formyltransferase (393 aa).

N(1)-(5-phospho-beta-D-ribosyl)glycinamide is bound by residues 22–23 (EL) and Glu-82. ATP contacts are provided by residues Arg-114, Lys-155, 160-165 (SSGKGQ), 195-198 (ESFV), and Glu-203. Residues 119–308 (RLAAEELGLR…EFALHVRAVL (190 aa)) enclose the ATP-grasp domain. Mg(2+)-binding residues include Glu-267 and Glu-279. Residues Asp-286, Lys-356, and 363–364 (RR) contribute to the N(1)-(5-phospho-beta-D-ribosyl)glycinamide site.

It belongs to the PurK/PurT family. As to quaternary structure, homodimer.

It carries out the reaction N(1)-(5-phospho-beta-D-ribosyl)glycinamide + formate + ATP = N(2)-formyl-N(1)-(5-phospho-beta-D-ribosyl)glycinamide + ADP + phosphate + H(+). Its pathway is purine metabolism; IMP biosynthesis via de novo pathway; N(2)-formyl-N(1)-(5-phospho-D-ribosyl)glycinamide from N(1)-(5-phospho-D-ribosyl)glycinamide (formate route): step 1/1. Functionally, involved in the de novo purine biosynthesis. Catalyzes the transfer of formate to 5-phospho-ribosyl-glycinamide (GAR), producing 5-phospho-ribosyl-N-formylglycinamide (FGAR). Formate is provided by PurU via hydrolysis of 10-formyl-tetrahydrofolate. The polypeptide is Formate-dependent phosphoribosylglycinamide formyltransferase (Oleidesulfovibrio alaskensis (strain ATCC BAA-1058 / DSM 17464 / G20) (Desulfovibrio alaskensis)).